A 348-amino-acid polypeptide reads, in one-letter code: Bifunctional nitrilase/nitrile hydratase NIT4B (348 aa).

Residues 29-300 (VRATVVQAST…EALISADLDL (272 aa)) form the CN hydrolase domain. Glu-69 (proton acceptor) is an active-site residue. Lys-156 (proton donor) is an active-site residue. The Nucleophile role is filled by Cys-190.

This sequence belongs to the carbon-nitrogen hydrolase superfamily. Nitrilase family. As to expression, expressed in roots, stems, cotyledons, leaves and flowers.

The enzyme catalyses a nitrile + 2 H2O = a carboxylate + NH4(+). It catalyses the reaction 3-cyano-L-alanine + 2 H2O = L-aspartate + NH4(+). Functionally, highly specific for beta-cyano-L-alanine (Ala(CN)). Low activity with 3-phenylpropionitrile (PPN). Not associated with auxin production but may be involved in cyanide detoxification. The chain is Bifunctional nitrilase/nitrile hydratase NIT4B (NIT4B) from Nicotiana tabacum (Common tobacco).